Consider the following 378-residue polypeptide: Chaperone protein DnaJ (378 aa).

Positions 5–70 (DYYESLGVAK…QKRAAYDQYG (66 aa)) constitute a J domain. The segment at 133-211 (GVTKEIRIPA…CHGHGRVEKS (79 aa)) adopts a CR-type zinc-finger fold. The Zn(2+) site is built by cysteine 146, cysteine 149, cysteine 163, cysteine 166, cysteine 185, cysteine 188, cysteine 199, and cysteine 202. CXXCXGXG motif repeat units lie at residues 146 to 153 (CDVCHGNG), 163 to 170 (CPTCHGNG), 185 to 192 (CPHCHGRG), and 199 to 206 (CVKCHGHG).

It belongs to the DnaJ family. Homodimer. The cofactor is Zn(2+).

It localises to the cytoplasm. In terms of biological role, participates actively in the response to hyperosmotic and heat shock by preventing the aggregation of stress-denatured proteins and by disaggregating proteins, also in an autonomous, DnaK-independent fashion. Unfolded proteins bind initially to DnaJ; upon interaction with the DnaJ-bound protein, DnaK hydrolyzes its bound ATP, resulting in the formation of a stable complex. GrpE releases ADP from DnaK; ATP binding to DnaK triggers the release of the substrate protein, thus completing the reaction cycle. Several rounds of ATP-dependent interactions between DnaJ, DnaK and GrpE are required for fully efficient folding. Also involved, together with DnaK and GrpE, in the DNA replication of plasmids through activation of initiation proteins. This Pectobacterium carotovorum subsp. carotovorum (strain PC1) protein is Chaperone protein DnaJ.